The following is a 173-amino-acid chain: CASP-like protein 2D1 (173 aa).

Topologically, residues 1-9 (MAPLLKLLD) are cytoplasmic. The chain crosses the membrane as a helical span at residues 10-29 (SSLRVSVIPLSAATIWLTVT). The Extracellular segment spans residues 30 to 50 (NHQDNSSYGNLKYSNIMGLKY). Residue Asn-34 is glycosylated (N-linked (GlcNAc...) asparagine). Residues 51-71 (MVCISAICASYAFVAAVSIWI) traverse the membrane as a helical segment. Over 72–86 (KCLVNKVWLFFVSDQ) the chain is Cytoplasmic. The helical transmembrane segment at 87-107 (IIAYLMVTSVAAAMEILYIAY) threads the bilayer. Topologically, residues 108-131 (NGDQKVTWSEACTSYGKFCNGMKT) are extracellular. A helical transmembrane segment spans residues 132–152 (ALILHALTLCFFIVLAVISAY). Residues 153–173 (RAFSMYQPPVSSKETVEGDAT) are Cytoplasmic-facing.

This sequence belongs to the Casparian strip membrane proteins (CASP) family. In terms of assembly, homodimer and heterodimers.

It localises to the cell membrane. In Ricinus communis (Castor bean), this protein is CASP-like protein 2D1.